The chain runs to 876 residues: Alanine--tRNA ligase (876 aa).

Zn(2+)-binding residues include H565, H569, C667, and H671.

It belongs to the class-II aminoacyl-tRNA synthetase family. Zn(2+) is required as a cofactor.

The protein localises to the cytoplasm. It catalyses the reaction tRNA(Ala) + L-alanine + ATP = L-alanyl-tRNA(Ala) + AMP + diphosphate. Catalyzes the attachment of alanine to tRNA(Ala) in a two-step reaction: alanine is first activated by ATP to form Ala-AMP and then transferred to the acceptor end of tRNA(Ala). Also edits incorrectly charged Ser-tRNA(Ala) and Gly-tRNA(Ala) via its editing domain. The chain is Alanine--tRNA ligase from Staphylococcus aureus (strain MRSA252).